The chain runs to 609 residues: DNA mismatch repair protein MutL (609 aa).

The protein belongs to the DNA mismatch repair MutL/HexB family.

This protein is involved in the repair of mismatches in DNA. It is required for dam-dependent methyl-directed DNA mismatch repair. May act as a 'molecular matchmaker', a protein that promotes the formation of a stable complex between two or more DNA-binding proteins in an ATP-dependent manner without itself being part of a final effector complex. The protein is DNA mismatch repair protein MutL of Rickettsia felis (strain ATCC VR-1525 / URRWXCal2) (Rickettsia azadi).